The chain runs to 249 residues: Methyltransferase 1 (249 aa).

Belongs to the FkbM methyltransferase family.

Its pathway is secondary metabolite biosynthesis. Methyltransferase; part of the pathway that mediates the biosynthesis of tenellin-type 2-pyridones, iron-chelating compounds involved in iron stress tolerance, competition with the natural competitor fungus Metarhizium robertsii and insect hosts infection. Methylates pyridovericin-N-O-(beta-D-glucopyranoside) produced by the UDP-glucosyltransferase GT1 to yield pyridovericin-N-O-(4-O-methyl-beta-D-glucopyranoside) (PMGP). The pathway begins with the assembly of the polyketide-amino acid backbone by the hybrid PKS-NRPS tenS with the help of the enoyl reductase tenC. These enzymes catalyze the synthesis of the pyrrolidine-2-dione intermediates pretellinin A, 11-hydropretellenin A, 12-hydropretellenin A, 13-hydropretellenin A, 14-hydropretellenin A, 12-oxopretellenin A and prototellinin D. The cytochrome P450 monooxygenase tenA then catalyzes an oxidative ring expansion of pretenellin A and 14-hydropretellenin A to form the 2-pyridone core, leading to pretenellin B and pyridovericin, respectively. The cytochrome P450 monooxygenase tenB is then required for the selective N-hydroxylation of the 2-pyridone nitrogen of yield tellinin and 15-hydroxytellenin (15-HT), respectively. The UDP-glucosyltransferase GT1 and the methyltransferase MT1, located outside the tenS gene cluster, contribute to the stepwise glycosylation and methylation of 15-HT to obtain the glycoside pyridovericin-N-O-(4-O-methyl-beta-D-glucopyranoside) (PMGP). Additional related compounds such as 1-O-methyl-15-HT, (8Z)-1-O-methyl-15-HT, and O-methyltenellin A are also produced but the enzymes involved in their biosynthesis have still to be determined. This Beauveria bassiana (strain ARSEF 2860) (White muscardine disease fungus) protein is Methyltransferase 1.